A 339-amino-acid chain; its full sequence is uncharacterized protein (339 aa).

Positions 17, 19, 197, and 278 each coordinate Zn(2+). Asp279 is a substrate binding site.

It belongs to the metallo-dependent hydrolases superfamily. Adenosine and AMP deaminases family. Adenine deaminase type 2 subfamily. The cofactor is Zn(2+).

Its subcellular location is the cytoplasm. The protein resides in the nucleus. This is an uncharacterized protein from Schizosaccharomyces pombe (strain 972 / ATCC 24843) (Fission yeast).